The chain runs to 383 residues: Acetylornithine deacetylase (383 aa).

Zn(2+) is bound at residue His-80. The active site involves Asp-82. Position 112 (Asp-112) interacts with Zn(2+). Glu-144 is an active-site residue. Zn(2+) is bound by residues Glu-145, Glu-169, and His-355.

Belongs to the peptidase M20A family. ArgE subfamily. In terms of assembly, homodimer. The cofactor is Zn(2+). It depends on Co(2+) as a cofactor. Glutathione serves as cofactor.

It localises to the cytoplasm. The catalysed reaction is N(2)-acetyl-L-ornithine + H2O = L-ornithine + acetate. The protein operates within amino-acid biosynthesis; L-arginine biosynthesis; L-ornithine from N(2)-acetyl-L-ornithine (linear): step 1/1. Functionally, catalyzes the hydrolysis of the amide bond of N(2)-acetylated L-amino acids. Cleaves the acetyl group from N-acetyl-L-ornithine to form L-ornithine, an intermediate in L-arginine biosynthesis pathway, and a branchpoint in the synthesis of polyamines. This Pectobacterium atrosepticum (strain SCRI 1043 / ATCC BAA-672) (Erwinia carotovora subsp. atroseptica) protein is Acetylornithine deacetylase.